The chain runs to 1033 residues: NACHT, LRR and PYD domains-containing protein 3 (1033 aa).

A Pyrin domain is found at 1–91 (MTSVRCKLAQ…WEKAKKDQPE (91 aa)). Ser3 carries the post-translational modification Phosphoserine. Cysteines 6 and 104 form a disulfide. The residue at position 11 (Tyr11) is a Phosphotyrosine. Cys126 carries S-palmitoyl cysteine lipidation. Positions 127–130 (KKKK) are required for binding to phosphatidylinositol 4-phosphate (PtdIns4P). Phosphotyrosine; by BTK occurs at positions 132, 136, and 145. The FISNA domain occupies 136–206 (YRRHVRSRFY…SSLKLELLFE (71 aa)). Position 157 is a phosphoserine (Ser157). At Tyr164 the chain carries Phosphotyrosine; by BTK. Thr165 contributes to the ATP binding site. Ser194 carries the post-translational modification Phosphoserine; by MAPK8. At Ser197 the chain carries Phosphoserine. The 317-residue stretch at 216 to 532 (HTVVFQGAAG…EFFAAMYYLL (317 aa)) folds into the NACHT domain. 222-230 (GAAGIGKTI) serves as a coordination point for ATP. The residue at position 261 (Ser261) is a Phosphoserine. The residue at position 291 (Ser291) is a Phosphoserine; by PKD/PRKD1. Lys320 is covalently cross-linked (Glycyl lysine isopeptide (Lys-Gly) (interchain with G-Cter in ubiquitin)). Ser330 bears the Phosphoserine mark. Positions 351–355 (LEKLQ) match the KFERQ-like motif 1 motif. Lys426 participates in a covalent cross-link: Glycyl lysine isopeptide (Lys-Gly) (interchain with G-Cter in ubiquitin). An ATP-binding site is contributed by His518. Positions 601–605 (QVRLE) match the KFERQ-like motif 2 motif. Lys687 participates in a covalent cross-link: Glycyl lysine isopeptide (Lys-Gly) (interchain with G-Cter in ubiquitin). Ser725 and Ser732 each carry phosphoserine. LRR repeat units follow at residues 739–759 (SLTELDLSDNTLGDPGMRVLC), 768–789 (NIQRLWLGRCGLSHQCCFDISS), 796–816 (KLVELDLSDNALGDFGIRLLC), 825–846 (NLQKLWLVSCCLTSACCQDLAL), and 853–873 (SLTRLYIGENALGDSGVQVLC). A KFERQ-like motif 3 motif is present at residues 795-799 (QKLVE). Phosphoserine; by CSNK1A1 is present on Ser803. S-palmitoyl cysteine attachment occurs at residues Cys834, Cys835, and Cys841. Tyr858 bears the Phosphotyrosine mark. Lys875 is covalently cross-linked (Glycyl lysine isopeptide (Lys-Gly) (interchain with G-Cter in ubiquitin)). LRR repeat units follow at residues 882–903 (NLQKLGLVNSGLTSICCSALTS), 910–930 (NFTHLYLRSNALGDTGLRLLC), 939–960 (KLQMLELDNCSLTSHSCWNLST), and 967–988 (SLRKLNLGNNDLGDLCVVTLCE). Residue Cys955 is the site of S-palmitoyl cysteine attachment. Lys970 is covalently cross-linked (Glycyl lysine isopeptide (Lys-Gly) (interchain with G-Cter in ubiquitin)). Residues 988–992 (EVLKQ) carry the KFERQ-like motif 4 motif. Ser1032 is subject to Phosphoserine.

Belongs to the NLRP family. In terms of assembly, sensor component of NLRP3 inflammasomes; inflammasomes are supramolecular complexes that assemble in the cytosol in response to pathogens and other damage-associated signals and play critical roles in innate immunity and inflammation. The core of NLRP3 inflammasomes consists of a signal sensor component (NLRP3), an adapter (PYCARD/ASC), which recruits an effector pro-inflammatory caspase (CASP1 and, possibly, CASP4 and CASP5). Homodecamer; inactive NLRP3 forms homodecameric double-ring cages that hide pyrin domains within NACHT-LRR rings to avoid premature activation. Interacts (via pyrin domain) with PYCARD/ASC (via pyrin domain); interaction is direct. Interacts (via LRR repeat domain) with NEK7 (via N-terminus); the interaction is required for the formation of the complex NLRP3:PYCARD, oligomerization of PYCARD/ASC and activation of CASP1. Interacts (via LRR repeat domain) with NR4A1/Nur77 (via N-terminus); the interaction is direct, requires activation of NR4A1 by its ligands NBRE-containing dsDNA and lipopolysaccharide, and stimulates the association of NLRP3 with NEK7 for non-canonical NLRP3 inflammasome activation. Interacts with CARD8; leading to inhibit formation of the NLRP3 inflammasome. Interacts with MEFV; this interaction targets NLRP3 to degradation by autophagy, hence preventing excessive IL1B- and IL18-mediated inflammation. Interacts with EIF2AK2/PKR; this interaction requires EIF2AK2 activity, is accompanied by EIF2AK2 autophosphorylation and promotes inflammasome assembly in response to specific stimuli. Interacts with GBP5 (via DAPIN domain); this interaction promotes inflammasome assembly in response to microbial and soluble, but not crystalline, agents. Interacts with PML (isoform PML-1) (via the leucine-rich repeat (LRR) domain); PML-mediated increase in NLRP3 inflammasome activation does not depend upon this interaction. Interacts (via NACHT domain) with DHX33 (via DEAH box); NLRP3 activation in presence of cytosolic dsRNA is mediated by DHX33. Interacts (via NACHT and LRR domains) with ARRB2; this interaction is direct and inducible by polyunsaturated fatty acids (PUFAs). Interacts (via NACHT domain) with DDX3X under both LPS-primed and inflammasome-activating conditions. Interacts with IRF4 (via the LRR domain); this interaction is direct and is required for optimal IRF4 binding to IL4 promoter and efficient IL4 transactivation during differentiation of Th2 helper T-cells. Interacts with MAVS; promoting localization to mitochondria and activation of the NLRP3 inflammasome. Interacts with MARK4; promoting localization of NLRP3 to the microtubule organizing center (MTOC). Interacts with TRIM50; this interaction also promotes NLRP3 oligomerization and subsequent inflammasome activation. Interacts with IRGM; preventing NLRP3 inflammasome assembly and promoting NLRP3 degradation. Interacts (via KFERQ-like motifs) with HSPA8/HSC70; promoting NLRP3 degradation by the chaperone-mediated autophagy pathway. Interacts (via NACHT and LLR domains) with ABHD8; this interaction is enhanced in the presence of NLRP3 inflammasome inducers, such as ATP, nigericin, silica, or alum. Interaction with ABHD8 leads the recruitment of ZDHHC12, hence facilitating NLRP3 palmitoylation and degradation by the chaperone-mediated autophagy pathway (CMA), therefore attenuating NLRP3 inflammasome activation. Post-translationally, phosphorylation at Ser-194 by MAPK8/JNK1 increases inflammasome activation by promoting deubiquitination by BRCC3 and NLRP3 homooligomerization. Phosphorylation at Ser-803 by CSNK1A1 prevents inflammasome activation by preventing NEK7 recruitment. Phosphorylation at Ser-3 in the pyrin domain inhibits homomultimerization of NLRP3 and activation of the NLRP3 inflammasome: dephosphorylation by protein phosphatase 2A (PP2A) promotes assembly of the NLRP3 inflammasome. Phosphorylation at Ser-291 by PKD/PRKD1 promotes NLRP3 inflammasome assembly. Phosphorylation by ERK1/MAPK3 promotes NLRP3 inflammasome assembly. Phosphorylation by BTK (at Tyr-132, Tyr-136, Tyr-145 and Tyr-164) in the region that mediates binding to phosphatidylinositol phosphate, promotes relocalization of NLRP3 and assembly of the NLRP3 inflammasome. Phosphorylation at Tyr-858 inhibits NLRP3 inflammasome assembly: dephosphorylation by PTPN22 promotes inflammasome activation Phosphorylated by LATS1 and LATS2 at Ser-261 following palmitoylation by ZDHHC1, promoting its relocalization to the microtubule organizing center (MTOC), where NLRP3 is activated by NEK7, leading to inflammasome assembly and activation. Ubiquitinated; undergoes both 'Lys-48'- and 'Lys-63'-linked polyubiquitination. Ubiquitination does not lead to degradation, but inhibits inflammasome activation. Deubiquitination is catalyzed by BRCC3 and associated with NLRP3 activation and inflammasome assembly. This process can be induced by the activation of Toll-like receptors (by LPS), through a non-transcriptional pathway dependent on the mitochondrial production of reactive oxygen species, and by ATP. Ubiquitinated by TRIM31 via 'Lys-48'-linked ubiquitination, leading to its degradation by the proteasome. Ubiquitinated at Lys-687 by the SCF(FBXL2) complex, leading to its degradation by the proteasome. Ubiquitinated by TRIM35 via 'lys-48' and 'Lys-63'-linked ubiquitination leading to inhibition of NLRP3 inflammasome activation. Undergoes 'Lys-27'-linked polyubiquitination by MARCHF5, leading to NLRP3-NEK7 complex formation and NLRP3 oligomerization. In terms of processing, the disulfide bond in the pyrin domain might play a role in reactive oxygen species-mediated activation. Post-translationally, palmitoylation by ZDHHC12 promotes NLRP3 degradation by the chaperone-mediated autophagy pathway (CMA) and therefore limits NLRP3 inflammasome activation. Interaction with ZDHHC12, and hence NLRP3 palmitoylation, is enhanced by ABHD8. Following palmitoylation, HSPA8/HSC70 recognizes and binds the KFERQ-like motifs on NLRP3 and promotes NLRP3 recruitment to lysosomes, where it is degraded via the chaperone-mediated autophagy pathway in a LAMP2-dependent process. Palmitoylation at Cys-834 and Cys-835 by ZDHHC5 enhances its binding to NEK7 leading to inflammasome assembly and activation. Palmitoylation at Cys-126 and Cys-955 by ZDHHC1 facilitates phosphorylation at Ser-261 by LATS1 and LATS2, promoting its relocalization to the microtubule organizing center (MTOC), where NLRP3 is activated by NEK7, leading to inflammasome assembly and activation. Depalmitoylated by ABHD17A. Degraded via selective autophagy following interaction with Irgm1. Irgm1 promotes NLRP3 recruitment to autophagosome membranes, promoting its SQSTM1/p62-dependent autophagy-dependent degradation. Expressed with high levels in peripheral blood leukocytes, including Th2 lymphocytes and macrophages. Expressed at low levels in resting osteoblasts (at protein level).

It localises to the cytoplasm. It is found in the cytosol. Its subcellular location is the inflammasome. The protein resides in the cytoskeleton. The protein localises to the microtubule organizing center. It localises to the golgi apparatus membrane. It is found in the endoplasmic reticulum. Its subcellular location is the mitochondrion. The protein resides in the secreted. The protein localises to the nucleus. The enzyme catalyses ATP + H2O = ADP + phosphate + H(+). Under resting conditions, NLRP3 binds ADP and is autoinhibited. Inactive NLRP3 forms homodecameric double-ring cages that hide pyrin domains within NACHT-LRR rings to avoid premature activation. NLRP3 activation stimuli include extracellular ATP, nigericin, reactive oxygen species, crystals of monosodium urate or cholesterol, amyloid-beta fibers, environmental or industrial particles and nanoparticles, such as asbestos, silica, aluminum salts, cytosolic dsRNA, etc. Almost all stimuli trigger intracellular K(+) efflux. These stimuli lead to membrane perturbations that induce activation of NLRP3. Upon activation, NLRP3 is transported to microtubule organizing center (MTOC), where it is unlocked by NEK7, leading to its relocalization to dispersed trans-Golgi network (dTGN) vesicle membranes and recruitment of PYCARD/ASC for the formation of an active inflammasome complex. NEK7-activated NLRP3 forms a disk-shaped inflammasome. NLRP3 and PYCARD/ASC interact via their respective pyrin domains; interaction initiates speck formation (nucleation) which greatly enhances further addition of soluble PYCARD/ASC molecules to the speck in a prion-like polymerization process. Clustered PYCARD/ASC nucleates the formation of CASP1 filaments through the interaction of their respective CARD domains, acting as a platform for CASP1 polymerization and activation. Active CASP1 then processes IL1B and IL18 precursors, leading to the release of mature cytokines in the extracellular milieu and inflammatory response. NLRP3 inflammasome assembly is inhibited by IRGM, which impedes NLRP3 oligomerization. NLRP3 inflammasome is inhibited by cyclic AMP (cAMP), which directly binds NLRP3; inhibition is relieved by calcium-sensing receptor CASR, which inhibits production of cAMP. Specifically inhibited by sulfonylurea MCC950 (also named CP-456,773, CRID3), a potent and specific small-molecule inhibitor of the NLRP3 inflammasome that acts by preventing ATP hydrolysis. In terms of biological role, sensor component of the NLRP3 inflammasome, which mediates inflammasome activation in response to defects in membrane integrity, leading to secretion of inflammatory cytokines IL1B and IL18 and pyroptosis. In response to pathogens and other damage-associated signals that affect the integrity of membranes, initiates the formation of the inflammasome polymeric complex composed of NLRP3, CASP1 and PYCARD/ASC. Recruitment of pro-caspase-1 (proCASP1) to the NLRP3 inflammasome promotes caspase-1 (CASP1) activation, which subsequently cleaves and activates inflammatory cytokines IL1B and IL18 and gasdermin-D (GSDMD), promoting cytokine secretion and pyroptosis. Activation of NLRP3 inflammasome is also required for HMGB1 secretion; stimulating inflammatory responses. Under resting conditions, ADP-bound NLRP3 is autoinhibited. NLRP3 activation stimuli include extracellular ATP, nigericin, reactive oxygen species, crystals of monosodium urate or cholesterol, amyloid-beta fibers, environmental or industrial particles and nanoparticles, such as asbestos, silica, aluminum salts, cytosolic dsRNA, etc. Almost all stimuli trigger intracellular K(+) efflux. These stimuli lead to membrane perturbation and activation of NLRP3. Upon activation, NLRP3 is transported to microtubule organizing center (MTOC), where it is unlocked by NEK7, leading to its relocalization to dispersed trans-Golgi network (dTGN) vesicle membranes and formation of an active inflammasome complex. Associates with dTGN vesicle membranes by binding to phosphatidylinositol 4-phosphate (PtdIns4P). Shows ATPase activity. Functionally, independently of inflammasome activation, regulates the differentiation of T helper 2 (Th2) cells and has a role in Th2 cell-dependent asthma and tumor growth. During Th2 differentiation, required for optimal IRF4 binding to IL4 promoter and for IRF4-dependent IL4 transcription. Binds to the consensus DNA sequence 5'-GRRGGNRGAG-3'. May also participate in the transcription of IL5, IL13, GATA3, CCR3, CCR4 and MAF. The chain is NACHT, LRR and PYD domains-containing protein 3 from Mus musculus (Mouse).